Here is a 392-residue protein sequence, read N- to C-terminus: Succinate--CoA ligase [ADP-forming] subunit beta (392 aa).

In terms of domain architecture, ATP-grasp spans 9-248 (KEILRGFGVT…TSEEDPLEVE (240 aa)). Residues Lys-50, 57–59 (GRG), Glu-103, Met-106, and Glu-111 contribute to the ATP site. Positions 203 and 217 each coordinate Mg(2+). Substrate-binding positions include Asn-268 and 325 to 327 (GIV).

It belongs to the succinate/malate CoA ligase beta subunit family. In terms of assembly, heterotetramer of two alpha and two beta subunits. The cofactor is Mg(2+).

The enzyme catalyses succinate + ATP + CoA = succinyl-CoA + ADP + phosphate. The catalysed reaction is GTP + succinate + CoA = succinyl-CoA + GDP + phosphate. Its pathway is carbohydrate metabolism; tricarboxylic acid cycle; succinate from succinyl-CoA (ligase route): step 1/1. Its function is as follows. Succinyl-CoA synthetase functions in the citric acid cycle (TCA), coupling the hydrolysis of succinyl-CoA to the synthesis of either ATP or GTP and thus represents the only step of substrate-level phosphorylation in the TCA. The beta subunit provides nucleotide specificity of the enzyme and binds the substrate succinate, while the binding sites for coenzyme A and phosphate are found in the alpha subunit. The protein is Succinate--CoA ligase [ADP-forming] subunit beta of Chloroherpeton thalassium (strain ATCC 35110 / GB-78).